Consider the following 305-residue polypeptide: Aspartate carbamoyltransferase catalytic subunit (305 aa).

Positions 56 and 57 each coordinate carbamoyl phosphate. K85 lines the L-aspartate pocket. Positions 106, 134, and 137 each coordinate carbamoyl phosphate. R167 and R227 together coordinate L-aspartate. Positions 266 and 267 each coordinate carbamoyl phosphate.

This sequence belongs to the aspartate/ornithine carbamoyltransferase superfamily. ATCase family. Heterooligomer of catalytic and regulatory chains.

It carries out the reaction carbamoyl phosphate + L-aspartate = N-carbamoyl-L-aspartate + phosphate + H(+). Its pathway is pyrimidine metabolism; UMP biosynthesis via de novo pathway; (S)-dihydroorotate from bicarbonate: step 2/3. Functionally, catalyzes the condensation of carbamoyl phosphate and aspartate to form carbamoyl aspartate and inorganic phosphate, the committed step in the de novo pyrimidine nucleotide biosynthesis pathway. This Thermoplasma acidophilum (strain ATCC 25905 / DSM 1728 / JCM 9062 / NBRC 15155 / AMRC-C165) protein is Aspartate carbamoyltransferase catalytic subunit.